The chain runs to 244 residues: MQTLLALNWKMNKTPTEARSWAEELTTKYAPAEGVDLAVLAPALDLSALAANLPAGIAFGGQDVSAHESGAYTGEISAAMLKDAGASCVVVGHSERREYHDESDAXVAAKARQAQANGLLPIVCVGENLDVRERGEHVPQTLAQLRGSLEGVGADVVVAYEPVWAIGTGKTATADDAEELAAAIRGALREQYGARAEGIRVLYGGSVKPENIAEICGKPNVNGALVGGASLKVPDVLGMLDALR.

8-10 lines the substrate pocket; the sequence is NWK. The active-site Electrophile is the His93. Catalysis depends on Glu161, which acts as the Proton acceptor. Residues Gly167, Ser206, and 227–228 each bind substrate; that span reads GG.

The protein belongs to the triosephosphate isomerase family. Homodimer.

Its subcellular location is the cytoplasm. The catalysed reaction is D-glyceraldehyde 3-phosphate = dihydroxyacetone phosphate. The protein operates within carbohydrate biosynthesis; gluconeogenesis. It participates in carbohydrate degradation; glycolysis; D-glyceraldehyde 3-phosphate from glycerone phosphate: step 1/1. Functionally, involved in the gluconeogenesis. Catalyzes stereospecifically the conversion of dihydroxyacetone phosphate (DHAP) to D-glyceraldehyde-3-phosphate (G3P). The chain is Triosephosphate isomerase from Deinococcus radiodurans (strain ATCC 13939 / DSM 20539 / JCM 16871 / CCUG 27074 / LMG 4051 / NBRC 15346 / NCIMB 9279 / VKM B-1422 / R1).